The sequence spans 132 residues: Protein LEKR1 (132 aa).

A coiled-coil region spans residues 37–116 (FKAMEEKVKA…KKQLSHLQDE (80 aa)).

The chain is Protein LEKR1 (LEKR1) from Homo sapiens (Human).